Consider the following 270-residue polypeptide: 5'-AMP-activated protein kinase subunit beta-1 (270 aa).

Residues 1-44 (MGNTSSERAALDRQGGHKTPRRDSSGGSKDGDRPKILMDSPEDA) are disordered. A lipid anchor (N-myristoyl glycine) is attached at Gly2. A Phosphothreonine modification is found at Thr4. Phosphoserine occurs at positions 5 and 6. Basic and acidic residues predominate over residues 9 to 36 (AALDRQGGHKTPRRDSSGGSKDGDRPKI). The residue at position 19 (Thr19) is a Phosphothreonine. Residues Ser24 and Ser25 each carry the phosphoserine; by autocatalysis modification. A phosphoserine mark is found at Ser40, Ser96, and Ser101. A glycogen-binding domain region spans residues 68–163 (EVNDKAPAQA…QVKKTDFEVF (96 aa)). Ser108 carries the post-translational modification Phosphoserine; by autocatalysis. Thr148 carries the post-translational modification Phosphothreonine. Position 182 is a phosphoserine (Ser182). Lys201 is modified (N6-succinyllysine).

It belongs to the 5'-AMP-activated protein kinase beta subunit family. As to quaternary structure, AMPK is a heterotrimer of an alpha catalytic subunit (PRKAA1 or PRKAA2), a beta (PRKAB1 or PRKAB2) and a gamma non-catalytic subunits (PRKAG1, PRKAG2 or PRKAG3). Interacts with FNIP1 and FNIP2. Post-translationally, phosphorylated when associated with the catalytic subunit (PRKAA1 or PRKAA2). Phosphorylated by ULK1; leading to negatively regulate AMPK activity and suggesting the existence of a regulatory feedback loop between ULK1 and AMPK.

Functionally, non-catalytic subunit of AMP-activated protein kinase (AMPK), an energy sensor protein kinase that plays a key role in regulating cellular energy metabolism. In response to reduction of intracellular ATP levels, AMPK activates energy-producing pathways and inhibits energy-consuming processes: inhibits protein, carbohydrate and lipid biosynthesis, as well as cell growth and proliferation. AMPK acts via direct phosphorylation of metabolic enzymes, and by longer-term effects via phosphorylation of transcription regulators. Also acts as a regulator of cellular polarity by remodeling the actin cytoskeleton; probably by indirectly activating myosin. Beta non-catalytic subunit acts as a scaffold on which the AMPK complex assembles, via its C-terminus that bridges alpha (PRKAA1 or PRKAA2) and gamma subunits (PRKAG1, PRKAG2 or PRKAG3). This chain is 5'-AMP-activated protein kinase subunit beta-1 (PRKAB1), found in Bos taurus (Bovine).